The sequence spans 299 residues: Acarbose 7(IV)-phosphotransferase (299 aa).

The protein belongs to the carbohydrate kinase PfkB family.

It catalyses the reaction acarbose + ATP = acarbose 7(IV)-phosphate + ADP + H(+). Its function is as follows. Catalyzes the phosphorylation of the alpha-glucosidase inhibitor acarbose. Phosphorylation of acarbose could be a resistance-like self-protection mechanism. The sequence is that of Acarbose 7(IV)-phosphotransferase from Actinoplanes sp. (strain ATCC 31044 / CBS 674.73 / SE50/110).